The sequence spans 202 residues: Nucleoside triphosphate pyrophosphatase (202 aa).

The Proton acceptor role is filled by D79.

The protein belongs to the Maf family. It depends on a divalent metal cation as a cofactor.

It is found in the cytoplasm. The catalysed reaction is a ribonucleoside 5'-triphosphate + H2O = a ribonucleoside 5'-phosphate + diphosphate + H(+). It catalyses the reaction a 2'-deoxyribonucleoside 5'-triphosphate + H2O = a 2'-deoxyribonucleoside 5'-phosphate + diphosphate + H(+). Functionally, nucleoside triphosphate pyrophosphatase. May have a dual role in cell division arrest and in preventing the incorporation of modified nucleotides into cellular nucleic acids. The protein is Nucleoside triphosphate pyrophosphatase of Nitrobacter hamburgensis (strain DSM 10229 / NCIMB 13809 / X14).